The primary structure comprises 49 residues: Small, acid-soluble spore protein K (49 aa).

A disordered region spans residues 1–49 (MRNKAKGFPNQVNHKFEGEPGATDAYASKRPNGETNTRPQERMRASGKR). A compositionally biased stretch (basic and acidic residues) spans 39–49 (PQERMRASGKR).

The protein belongs to the SspK family.

The protein resides in the spore core. The protein is Small, acid-soluble spore protein K of Bacillus pumilus (strain SAFR-032).